The chain runs to 543 residues: Hydroxylamine reductase (543 aa).

4 residues coordinate [4Fe-4S] cluster: cysteine 3, cysteine 6, cysteine 15, and cysteine 21. Residues histidine 244, glutamate 268, cysteine 312, cysteine 399, cysteine 427, cysteine 452, glutamate 486, and lysine 488 each contribute to the hybrid [4Fe-2O-2S] cluster site. Position 399 is a cysteine persulfide (cysteine 399).

Belongs to the HCP family. Requires [4Fe-4S] cluster as cofactor. It depends on hybrid [4Fe-2O-2S] cluster as a cofactor.

The protein resides in the cytoplasm. It catalyses the reaction A + NH4(+) + H2O = hydroxylamine + AH2 + H(+). Catalyzes the reduction of hydroxylamine to form NH(3) and H(2)O. The sequence is that of Hydroxylamine reductase from Methanocella arvoryzae (strain DSM 22066 / NBRC 105507 / MRE50).